Here is a 338-residue protein sequence, read N- to C-terminus: Cytochrome bd ubiquinol oxidase subunit 2 (338 aa).

9 consecutive transmembrane segments (helical) span residues Leu7 to Phe27, Ile50 to Ala70, Trp75 to Met95, Val119 to Phe139, Ile163 to Leu183, Met196 to Ala216, Glu227 to Ile247, Phe256 to Pro276, and Ile306 to Phe326.

The protein belongs to the cytochrome ubiquinol oxidase subunit 2 family. As to quaternary structure, heterodimer of subunits I and II. Heme b serves as cofactor. Requires heme d cis-diol as cofactor.

The protein resides in the cell membrane. It carries out the reaction 2 a ubiquinol + O2(in) + 4 H(+)(in) = 2 a ubiquinone + 2 H2O(in) + 4 H(+)(out). In Bacillus subtilis (strain 168), this protein is Cytochrome bd ubiquinol oxidase subunit 2 (cydB).